The chain runs to 487 residues: N-succinylglutamate 5-semialdehyde dehydrogenase (487 aa).

221-226 (GSSDTG) is an NAD(+) binding site. Active-site residues include E244 and C278.

The protein belongs to the aldehyde dehydrogenase family. AstD subfamily.

The catalysed reaction is N-succinyl-L-glutamate 5-semialdehyde + NAD(+) + H2O = N-succinyl-L-glutamate + NADH + 2 H(+). It participates in amino-acid degradation; L-arginine degradation via AST pathway; L-glutamate and succinate from L-arginine: step 4/5. Its function is as follows. Catalyzes the NAD-dependent reduction of succinylglutamate semialdehyde into succinylglutamate. The sequence is that of N-succinylglutamate 5-semialdehyde dehydrogenase from Burkholderia ambifaria (strain MC40-6).